The primary structure comprises 621 residues: Kelch-like protein 40 (621 aa).

The BTB domain maps to 33–98; sequence LDCVVRAGER…LYTSEIALDE (66 aa). One can recognise a BACK domain in the interval 133-239; that stretch reads CLAVFRLGLL…PRAFLESRVE (107 aa). A disordered region spans residues 265–295; it reads ITTLRKKKKGKDGAGAKEADKGTSKAKAEED. Over residues 275-292 the composition is skewed to basic and acidic residues; it reads KDGAGAKEADKGTSKAKA. 5 Kelch repeats span residues 360-412, 413-462, 463-510, 512-557, and 559-613; these read QVFV…EALN, SIYV…SHMD, LVYV…VHDG, IIVA…SLVG, and LYAI…PVRL.

Belongs to the KLHL40 family. In terms of assembly, component of the BCR(KLHL40) E3 ubiquitin ligase complex, at least composed of CUL3, KLHL40 and RBX1. Interacts with LMOD3. Highly expressed in fetal (19, 23 and 31 weeks of gestation) and adult skeletal muscle; expression levels tend to be higher in fetal compared to postnatal muscles (at protein level). Also expressed in fetal and adult heart.

The protein localises to the cytoplasm. It is found in the myofibril. The protein resides in the sarcomere. Its subcellular location is the a band. It localises to the i band. In terms of biological role, substrate-specific adapter of a BCR (BTB-CUL3-RBX1) E3 ubiquitin ligase complex that acts as a key regulator of skeletal muscle development. The BCR(KLHL40) complex acts by mediating ubiquitination and degradation of TFDP1, thereby regulating the activity of the E2F:DP transcription factor complex. Promotes stabilization of LMOD3 by acting as a negative regulator of LMOD3 ubiquitination; the molecular process by which it negatively regulates ubiquitination of LMOD3 is however unclear. The sequence is that of Kelch-like protein 40 from Homo sapiens (Human).